Consider the following 283-residue polypeptide: NFU1 iron-sulfur cluster scaffold homolog, mitochondrial (283 aa).

The N-terminal 65 residues, 1 to 65 (MSKFLSQAAI…ELRMPVACRR (65 aa)), are a transit peptide targeting the mitochondrion. The nifU stretch occupies residues 182-250 (IKELLDTRIR…IPEVESVEQV (69 aa)). Residues C219 and C222 each contribute to the [4Fe-4S] cluster site.

This sequence belongs to the NifU family.

It is found in the mitochondrion. In terms of biological role, molecular scaffold for [Fe-S] cluster assembly of mitochondrial iron-sulfur proteins. In Drosophila sechellia (Fruit fly), this protein is NFU1 iron-sulfur cluster scaffold homolog, mitochondrial.